The chain runs to 376 residues: DNA replication and repair protein RecF (376 aa).

30–37 (GNNAQGKS) serves as a coordination point for ATP.

It belongs to the RecF family.

It localises to the cytoplasm. In terms of biological role, the RecF protein is involved in DNA metabolism; it is required for DNA replication and normal SOS inducibility. RecF binds preferentially to single-stranded, linear DNA. It also seems to bind ATP. The sequence is that of DNA replication and repair protein RecF from Trichormus variabilis (strain ATCC 29413 / PCC 7937) (Anabaena variabilis).